The sequence spans 829 residues: Genome polyprotein (829 aa).

At serine 2 the chain carries N-acetylserine; by host. The interval 2 to 23 (STNPKPQRKTKRNTNRRPQDVK) is interaction with STAT1. Residues 2 to 58 (STNPKPQRKTKRNTNRRPQDVKFPGGGQIVGGVYLLPRRGPRLGVRATRKTSERSQP) form an interaction with EIF2AK2/PKR region. Residues 2-59 (STNPKPQRKTKRNTNRRPQDVKFPGGGQIVGGVYLLPRRGPRLGVRATRKTSERSQPR) form an interaction with DDX3X region. The tract at residues 2 to 75 (STNPKPQRKT…PKARRPKGRN (74 aa)) is disordered. The Cytoplasmic portion of the chain corresponds to 2–168 (STNPKPQRKT…EDGVNYATGN (167 aa)). 2 consecutive short sequence motifs (nuclear localization signal) follow at residues 5-13 (PKPQRKTKR) and 38-43 (PRRGPR). Basic residues predominate over residues 7 to 16 (PQRKTKRNTN). Positions 32–47 (GGVYLLPRRGPRLGVR) are enriched in low complexity. A Phosphoserine; by host modification is found at serine 53. 2 short sequence motifs (nuclear localization signal) span residues 58-64 (PRGRRQP) and 66-71 (PKARRP). Basic residues predominate over residues 58 to 73 (PRGRRQPIPKARRPKG). Serine 99 is subject to Phosphoserine; by host. Residues 112-152 (PRRRSRNLGKVIDTLTCGFVDLMGYIPLVGAPLRGAARALA) form an important for endoplasmic reticulum and mitochondrial localization region. A Phosphoserine; by host PKA modification is found at serine 116. The interval 122 to 173 (VIDTLTCGFVDLMGYIPLVGAPLRGAARALAHGVRVLEDGVNYATGNLPGCS) is interaction with APOA2. Residues 164–167 (YATG) are important for lipid droplets localization. A helical membrane pass occupies residues 169–189 (LPGCSFSIFLLALLSCLTVPA). A propeptide spans 178–191 (LLALLSCLTVPASA) (ER anchor for the core protein, removed in mature form by host signal peptidase). Residues 190–358 (SAYQVRNSTG…AGAHWGVLAG (169 aa)) are Lumenal-facing. N-linked (GlcNAc...) asparagine; by host glycans are attached at residues asparagine 196, asparagine 209, and asparagine 234. The tract at residues 265 to 296 (LVGSATLCSALYVGDLCGSVFLVGQLFTFSPR) is important for fusion. A glycan (N-linked (GlcNAc...) asparagine; by host) is linked at asparagine 305. Residues 359–379 (MAYFSMVGNWAKVLAVLLLFA) traverse the membrane as a helical segment. At 380-725 (GVDAETHVTG…WEYVVLLFLL (346 aa)) the chain is on the lumenal side. Positions 385–411 (THVTGGAAARSTLQLAGLFQPGAKQNV) are HVR1. Asparagine 417, asparagine 423, asparagine 430, and asparagine 448 each carry an N-linked (GlcNAc...) (high mannose) asparagine; by host glycan. Cystine bridges form between cysteine 429–cysteine 552, cysteine 452–cysteine 459, cysteine 486–cysteine 494, and cysteine 503–cysteine 508. The interval 474–479 (YAGGGG) is HVR2. Positions 480–493 (PDHRPYCWHYPPKP) are CD81-binding 1. Residue asparagine 540 is glycosylated (N-linked (GlcNAc...) asparagine; by host). Residues 544–551 (PPLGNWFG) form a CD81-binding 2 region. The N-linked (GlcNAc...) (high mannose) asparagine; by host glycan is linked to asparagine 556. Residues cysteine 564 and cysteine 569 are joined by a disulfide bond. An N-linked (GlcNAc...) (high mannose) asparagine; by host glycan is attached at asparagine 576. Cystine bridges form between cysteine 581–cysteine 585, cysteine 597–cysteine 620, and cysteine 607–cysteine 644. N-linked (GlcNAc...) (high mannose) asparagine; by host glycans are attached at residues asparagine 623 and asparagine 645. Cysteine 652 and cysteine 677 are oxidised to a cystine. Positions 660–671 (SELSPLLLSTTQ) are PKR/eIF2-alpha phosphorylation homology domain (PePHD). Residues 726 to 746 (LADARVCSCLWMMLLISQAEA) form a helical membrane-spanning segment. Residues 747-757 (ALENLVVLNAA) lie on the Lumenal side of the membrane. A helical membrane pass occupies residues 758-778 (SLAGTHGLVSFLVFFCFAWFL). The Cytoplasmic segment spans residues 779–781 (RGK). The chain crosses the membrane as a helical span at residues 782 to 803 (WVPGAVYALYGMWPLLLLLLAL). The Lumenal portion of the chain corresponds to 804-813 (PQRAYALDTE). The chain crosses the membrane as a helical span at residues 814–829 (VAASCGGVVLVGLMAL).

The protein belongs to the hepacivirus polyprotein family. In terms of assembly, homooligomer. Interacts with E1 (via C-terminus). Interacts with the non-structural protein 5A. Interacts (via N-terminus) with host STAT1 (via SH2 domain); this interaction results in decreased STAT1 phosphorylation and ubiquitin-mediated proteasome-dependent STAT1 degradation, leading to decreased IFN-stimulated gene transcription. Interacts with host STAT3; this interaction constitutively activates STAT3. Interacts with host LTBR receptor. Interacts with host TNFRSF1A receptor and possibly induces apoptosis. Interacts with host HNRPK. Interacts with host YWHAE. Interacts with host UBE3A/E6AP. Interacts with host DDX3X. Interacts with host APOA2. Interacts with host RXRA protein. Interacts with host SP110 isoform 3/Sp110b; this interaction sequesters the transcriptional corepressor SP110 away from the nucleus. Interacts with host CREB3 nuclear transcription protein; this interaction triggers cell transformation. Interacts with host ACY3. Interacts with host C1QR1. Interacts with host RBM24; this interaction, which enhances the interaction of the mature core protein with 5'-UTR, may inhibit viral translation and favor replication. Interacts with host EIF2AK2/PKR; this interaction induces the autophosphorylation of EIF2AK2. Part of the viral assembly initiation complex composed of NS2, E1, E2, NS3, NS4A, NS5A and the mature core protein. Forms a heterodimer with envelope glycoprotein E2. Interacts with mature core protein. Interacts with protease NS2. The heterodimer E1/E2 interacts with host CLDN1; this interaction plays a role in viral entry into host cell. Interacts with host SPSB2 (via C-terminus). Part of the viral assembly initiation complex composed of NS2, E1, E2, NS3, NS4A, NS5A and the mature core protein. As to quaternary structure, forms a heterodimer with envelope glycoprotein E1. Interacts with host CD81 and SCARB1 receptors; these interactions play a role in viral entry into host cell. Interacts with host EIF2AK2/PKR; this interaction inhibits EIF2AK2 and probably allows the virus to evade the innate immune response. Interacts with host CD209/DC-SIGN and CLEC4M/DC-SIGNR. Interact with host SPCS1; this interaction is essential for viral particle assembly. Interacts with protease NS2. The heterodimer E1/E2 interacts with host CLDN1; this interaction plays a role in viral entry into host cell. Part of the viral assembly initiation complex composed of NS2, E1, E2, NS3, NS4A, NS5A and the mature core protein. In terms of assembly, homohexamer. Homoheptamer. Interacts with protease NS2. Homodimer. Interacts with host SPCS1; this interaction is essential for viral particle assembly. Interacts with envelope glycoprotein E1. Interacts with envelope glycoprotein E2. Interacts with viroporin p7. Interacts with serine protease/helicase NS3. Part of the replication complex composed of NS2, NS3, NS4A, NS4B, NS5A and the RNA-directed RNA polymerase embedded in an ER-derived membranous web. Part of the viral assembly initiation complex composed of NS2, E1, E2, NS3, NS4A, NS5A and the mature core protein. The cofactor is Zn(2+). In terms of processing, specific enzymatic cleavages in vivo yield mature proteins. The structural proteins, core, E1, E2 and p7 are produced by proteolytic processing by host signal peptidases. The core protein precursor is synthesized as a 23 kDa, which is retained in the ER membrane through the hydrophobic signal peptide. Cleavage by the signal peptidase releases the 21 kDa mature core protein. The cleavage of the core protein precursor occurs between aminoacids 176 and 188 but the exact cleavage site is not known. Some degraded forms of the core protein appear as well during the course of infection. The other proteins (p7, NS2, NS3, NS4A, NS4B, NS5A and NS5B) are cleaved by the viral proteases. Autoprocessing between NS2 and NS3 is mediated by the NS2 cysteine protease catalytic domain and regulated by the NS3 N-terminal domain. Phosphorylated by host PKC and PKA. Post-translationally, ubiquitinated; mediated by UBE3A and leading to core protein subsequent proteasomal degradation. In terms of processing, highly N-glycosylated. Palmitoylation is required for NS2/3 autoprocessing and E2 recruitment to membranes.

It is found in the host endoplasmic reticulum membrane. Its subcellular location is the host mitochondrion membrane. The protein resides in the virion. The protein localises to the host cytoplasm. It localises to the host nucleus. It is found in the host lipid droplet. Its subcellular location is the virion membrane. The protein resides in the host mitochondrion. The protein localises to the host cell membrane. With respect to regulation, inhibited by the antiviral drug hexamethylene amiloride. Inhibition by amantadine appears to be genotype-dependent. Also inhibited by long-alkyl-chain iminosugar derivatives. Its function is as follows. Packages viral RNA to form a viral nucleocapsid, and promotes virion budding. Participates in the viral particle production as a result of its interaction with the non-structural protein 5A. Binds RNA and may function as a RNA chaperone to induce the RNA structural rearrangements taking place during virus replication. Modulates viral translation initiation by interacting with viral IRES and 40S ribosomal subunit. Affects various cell signaling pathways, host immunity and lipid metabolism. Prevents the establishment of cellular antiviral state by blocking the interferon-alpha/beta (IFN-alpha/beta) and IFN-gamma signaling pathways and by blocking the formation of phosphorylated STAT1 and promoting ubiquitin-mediated proteasome-dependent degradation of STAT1. Activates STAT3 leading to cellular transformation. Regulates the activity of cellular genes, including c-myc and c-fos. May repress the promoter of p53, and sequester CREB3 and SP110 isoform 3/Sp110b in the cytoplasm. Represses cell cycle negative regulating factor CDKN1A, thereby interrupting an important check point of normal cell cycle regulation. Targets transcription factors involved in the regulation of inflammatory responses and in the immune response: suppresses TNF-induced NF-kappa-B activation, and activates AP-1. Binds to dendritic cells (DCs) via C1QR1, resulting in down-regulation of T-lymphocytes proliferation. Alters lipid metabolism by interacting with hepatocellular proteins involved in lipid accumulation and storage. Induces up-regulation of FAS promoter activity, and thereby contributes to the increased triglyceride accumulation in hepatocytes (steatosis). Functionally, forms a heterodimer with envelope glycoprotein E2, which mediates virus attachment to the host cell, virion internalization through clathrin-dependent endocytosis and fusion with host membrane. Fusion with the host cell is most likely mediated by both E1 and E2, through conformational rearrangements of the heterodimer required for fusion rather than a classical class II fusion mechanism. E1/E2 heterodimer binds host apolipoproteins such as APOB and ApoE thereby forming a lipo-viro-particle (LVP). APOE associated to the LVP allows the initial virus attachment to cell surface receptors such as the heparan sulfate proteoglycans (HSPGs), syndecan-1 (SDC1), syndecan-1 (SDC2), the low-density lipoprotein receptor (LDLR) and scavenger receptor class B type I (SCARB1). The cholesterol transfer activity of SCARB1 allows E2 exposure and binding of E2 to SCARB1 and the tetraspanin CD81. E1/E2 heterodimer binding on CD81 activates the epithelial growth factor receptor (EGFR) signaling pathway. Diffusion of the complex E1-E2-EGFR-SCARB1-CD81 to the cell lateral membrane allows further interaction with Claudin 1 (CLDN1) and occludin (OCLN) to finally trigger HCV entry. In terms of biological role, forms a heterodimer with envelope glycoprotein E1, which mediates virus attachment to the host cell, virion internalization through clathrin-dependent endocytosis and fusion with host membrane. Fusion with the host cell is most likely mediated by both E1 and E2, through conformational rearrangements of the heterodimer required for fusion rather than a classical class II fusion mechanism. The interaction between envelope glycoprotein E2 and host apolipoprotein E/APOE allows the proper assembly, maturation and infectivity of the viral particles. This interaction is probably promoted via the up-regulation of cellular autophagy by the virus. E1/E2 heterodimer binds host apolipoproteins such as APOB and APOE thereby forming a lipo-viro-particle (LVP). APOE associated to the LVP allows the initial virus attachment to cell surface receptors such as the heparan sulfate proteoglycans (HSPGs), syndecan-1 (SDC1), syndecan-1 (SDC2), the low-density lipoprotein receptor (LDLR) and scavenger receptor class B type I (SCARB1). The cholesterol transfer activity of SCARB1 allows E2 exposure and binding of E2 to SCARB1 and the tetraspanin CD81. E1/E2 heterodimer binding on CD81 activates the epithelial growth factor receptor (EGFR) signaling pathway. Diffusion of the complex E1-E2-EGFR-SCARB1-CD81 to the cell lateral membrane allows further interaction with Claudin 1 (CLDN1) and occludin (OCLN) to finally trigger HCV entry. Inhibits host EIF2AK2/PKR activation, preventing the establishment of an antiviral state. Viral ligand for CD209/DC-SIGN and CLEC4M/DC-SIGNR, which are respectively found on dendritic cells (DCs), and on liver sinusoidal endothelial cells and macrophage-like cells of lymph node sinuses. These interactions allow the capture of circulating HCV particles by these cells and subsequent facilitated transmission to permissive cells such as hepatocytes and lymphocyte subpopulations. Ion channel protein that acts as a viroporin and plays an essential role in the assembly, envelopment and secretion of viral particles. Regulates the host cell secretory pathway, which induces the intracellular retention of viral glycoproteins and favors assembly of viral particles. Creates a pore in acidic organelles and releases Ca(2+) and H(+) in the cytoplasm of infected cells, leading to a productive viral infection. High levels of cytoplasmic Ca(2+) may trigger membrane trafficking and transport of viral ER-associated proteins to viroplasms, sites of viral genome replication. This ionic imbalance induces the assembly of the inflammasome complex, which triggers the maturation of pro-IL-1beta into IL-1beta through the action of caspase-1. Targets also host mitochondria and induces mitochondrial depolarization. In addition of its role as a viroporin, acts as a lipid raft adhesion factor. Its function is as follows. Cysteine protease required for the proteolytic auto-cleavage between the non-structural proteins NS2 and NS3. The N-terminus of NS3 is required for the function of NS2 protease (active region NS2-3). Promotes the initiation of viral particle assembly by mediating the interaction between structural and non-structural proteins. In Hepatitis C virus (isolate Glasgow) (HCV), this protein is Genome polyprotein.